Consider the following 776-residue polypeptide: Kinesin-like protein KLP1 (776 aa).

The Kinesin motor domain occupies 5 to 335 (AVKVFVRTRP…LRFASRVRTL (331 aa)). 91 to 98 (GQTGAGKT) serves as a coordination point for ATP. Positions 348-371 (ALLLRRYERQIKELKAELAMRDTL) form a coiled coil. A disordered region spans residues 441-535 (RRATEEGSGA…SNWGDAGPLS (95 aa)). A compositionally biased stretch (low complexity) spans 447-460 (GSGAAARGGDSAGP). Positions 579–657 (ALADTKASIR…SLKSAREELE (79 aa)) form a coiled coil. Positions 658–776 (PQIQAVAVAR…TQAVNRGLAR (119 aa)) are globular.

The protein belongs to the TRAFAC class myosin-kinesin ATPase superfamily. Kinesin family.

It localises to the cytoplasm. The protein localises to the cytoskeleton. It is found in the flagellum axoneme. Functionally, may play a role in rotation or twisting of the central pair microtubules of the flagella axoneme. The protein is Kinesin-like protein KLP1 (KLP1) of Chlamydomonas reinhardtii (Chlamydomonas smithii).